The following is an 83-amino-acid chain: CDC42 small effector protein 2 (83 aa).

S-palmitoyl cysteine attachment occurs at residues Cys10 and Cys11. In terms of domain architecture, CRIB spans 28–41 (IGEPTNFVHTAHVG). Phosphoserine occurs at positions 42 and 51.

It belongs to the CDC42SE/SPEC family. As to quaternary structure, interacts with CDC42 (in GTP-bound form). Interacts weakly with RAC1 and not at all with RHOA.

It localises to the cytoplasm. Its subcellular location is the cytoskeleton. It is found in the cell membrane. The protein resides in the cell projection. The protein localises to the phagocytic cup. Its function is as follows. Probably involved in the organization of the actin cytoskeleton by acting downstream of CDC42, inducing actin filament assembly. Alters CDC42-induced cell shape changes. In activated T-cells, may play a role in CDC42-mediated F-actin accumulation at the immunological synapse. May play a role in early contractile events in phagocytosis in macrophages. The polypeptide is CDC42 small effector protein 2 (Cdc42se2) (Rattus norvegicus (Rat)).